The primary structure comprises 739 residues: Sulfate transporter (739 aa).

A disordered region spans residues 1 to 44; that stretch reads MSSENKEQHNLSPRDLPEEAYGFPPELPLGAQRGSSTDLRQFEP. Ser12 bears the Phosphoserine mark. 2 helical membrane passes run 112–132 and 137–157; these read MMSG…YSLL and PIYG…FGTS. Asn205 is a glycosylation site (N-linked (GlcNAc...) asparagine). 2 helical membrane-spanning segments follow: residues 227–247 and 255–275; these read FMAG…VSVY and GFVT…LLGL. Asn357 carries an N-linked (GlcNAc...) asparagine glycan. 4 helical membrane-spanning segments follow: residues 378–398, 420–440, 455–475, and 524–544; these read LIPN…AITV, AIGF…SAAL, LSAI…APLF, and LLST…CVIL. Residues 568-719 form the STAS domain; the sequence is TYKNLRSKSG…YSLSEAVAFA (152 aa).

Belongs to the SLC26A/SulP transporter (TC 2.A.53) family. N-glycosylated. As to expression, cartilage and intestine. Expressed in the kidney (at protein level).

Its subcellular location is the cell membrane. The protein localises to the apical cell membrane. The catalysed reaction is oxalate(in) + sulfate(out) = oxalate(out) + sulfate(in). It catalyses the reaction sulfate(out) + 2 chloride(in) = sulfate(in) + 2 chloride(out). It carries out the reaction oxalate(out) + 2 chloride(in) = oxalate(in) + 2 chloride(out). The enzyme catalyses bromide(in) + chloride(out) = bromide(out) + chloride(in). The catalysed reaction is nitrate(in) + chloride(out) = nitrate(out) + chloride(in). It catalyses the reaction iodide(in) + chloride(out) = iodide(out) + chloride(in). Functionally, sulfate transporter which mediates sulfate uptake into chondrocytes in order to maintain adequate sulfation of proteoglycans which is needed for cartilage development. Mediates electroneutral anion exchange of sulfate ions for oxalate ions, sulfate and oxalate ions for chloride and/or hydroxyl ions and chloride ions for bromide, iodide and nitrate ions. The coupling of sulfate transport to both hydroxyl and chloride ions likely serves to ensure transport at both acidic pH when most sulfate uptake is mediated by sulfate-hydroxide exchange and alkaline pH when most sulfate uptake is mediated by sulfate-chloride exchange. Essential for chondrocyte proliferation, differentiation and cell size expansion. This chain is Sulfate transporter (Slc26a2), found in Rattus norvegicus (Rat).